Consider the following 656-residue polypeptide: Hemocyanin subunit A (656 aa).

Residues 1 to 18 (MWSLALATLFVLGTVIRA) form the signal peptide. Residues histidine 197, histidine 201, and histidine 227 each contribute to the Cu cation site. Residue asparagine 313 is glycosylated (N-linked (GlcNAc...) asparagine). Cu cation contacts are provided by histidine 348, histidine 352, and histidine 388. Cysteine 558 and cysteine 606 are joined by a disulfide.

This sequence belongs to the tyrosinase family. Hemocyanin subfamily. 36-chain polymer consisting of 6 hexamers, each of which includes 4 different chains, A, B, C and D. In terms of tissue distribution, hemolymph.

The protein localises to the secreted. It localises to the extracellular space. Its function is as follows. Hemocyanins are copper-containing oxygen carriers occurring freely dissolved in the hemolymph of many mollusks and arthropods. The chain is Hemocyanin subunit A (HCA) from Scutigera coleoptrata (House centipede).